A 415-amino-acid chain; its full sequence is Serine hydroxymethyltransferase (415 aa).

Residues Leu117 and 121–123 (GHL) each bind (6S)-5,6,7,8-tetrahydrofolate. Lys226 is subject to N6-(pyridoxal phosphate)lysine. (6S)-5,6,7,8-tetrahydrofolate is bound by residues Glu241 and 349 to 351 (SPF).

This sequence belongs to the SHMT family. As to quaternary structure, homodimer. Pyridoxal 5'-phosphate serves as cofactor.

The protein resides in the cytoplasm. The enzyme catalyses (6R)-5,10-methylene-5,6,7,8-tetrahydrofolate + glycine + H2O = (6S)-5,6,7,8-tetrahydrofolate + L-serine. It participates in one-carbon metabolism; tetrahydrofolate interconversion. The protein operates within amino-acid biosynthesis; glycine biosynthesis; glycine from L-serine: step 1/1. Its function is as follows. Catalyzes the reversible interconversion of serine and glycine with tetrahydrofolate (THF) serving as the one-carbon carrier. This reaction serves as the major source of one-carbon groups required for the biosynthesis of purines, thymidylate, methionine, and other important biomolecules. Also exhibits THF-independent aldolase activity toward beta-hydroxyamino acids, producing glycine and aldehydes, via a retro-aldol mechanism. This is Serine hydroxymethyltransferase from Geotalea uraniireducens (strain Rf4) (Geobacter uraniireducens).